The following is a 362-amino-acid chain: Cytochrome c oxidase subunit 2 (362 aa).

An N-terminal signal peptide occupies residues 1-28; the sequence is MEQQEKRGTVRKALLGSVIGFGGLALAG. Cys29 carries the N-palmitoyl cysteine lipid modification. Cys29 carries S-diacylglycerol cysteine lipidation. 2 consecutive transmembrane segments (helical) span residues 60–80 and 107–127; these read FWVW…GLFI and IPLE…LFFF. The tract at residues 171–206 is disordered; the sequence is SDYVGTDEKRQEAAEKTKFDQGGDNPNPINGRSKTD. Residues 176-191 show a composition bias toward basic and acidic residues; that stretch reads TDEKRQEAAEKTKFDQ. A compositionally biased stretch (polar residues) spans 197–206; the sequence is NPINGRSKTD. Residues His246, Cys287, Glu289, Cys291, His295, and Met298 each contribute to the Cu cation site. The disordered stretch occupies residues 325–362; the sequence is NSDALKSIGEAPYATSTHPFNSERATRDGANFDDTAAA.

This sequence belongs to the cytochrome c oxidase subunit 2 family. In terms of assembly, associates with subunits I, III and IV to form cytochrome c oxidase. The cofactor is binuclear copper center (CuA).

It is found in the cell membrane. The catalysed reaction is 4 Fe(II)-[cytochrome c] + O2 + 8 H(+)(in) = 4 Fe(III)-[cytochrome c] + 2 H2O + 4 H(+)(out). Its function is as follows. Subunits I and II form the functional core of the enzyme complex. Electrons originating in cytochrome c are transferred via heme a and Cu(A) to the binuclear center formed by heme a3 and Cu(B). This is Cytochrome c oxidase subunit 2 (ctaC) from Corynebacterium diphtheriae (strain ATCC 700971 / NCTC 13129 / Biotype gravis).